Reading from the N-terminus, the 338-residue chain is Tetraacyldisaccharide 4'-kinase (338 aa).

65-72 (TVGGTGKT) is an ATP binding site.

This sequence belongs to the LpxK family.

It carries out the reaction a lipid A disaccharide + ATP = a lipid IVA + ADP + H(+). It functions in the pathway glycolipid biosynthesis; lipid IV(A) biosynthesis; lipid IV(A) from (3R)-3-hydroxytetradecanoyl-[acyl-carrier-protein] and UDP-N-acetyl-alpha-D-glucosamine: step 6/6. Its function is as follows. Transfers the gamma-phosphate of ATP to the 4'-position of a tetraacyldisaccharide 1-phosphate intermediate (termed DS-1-P) to form tetraacyldisaccharide 1,4'-bis-phosphate (lipid IVA). The polypeptide is Tetraacyldisaccharide 4'-kinase (Paraburkholderia xenovorans (strain LB400)).